The primary structure comprises 349 residues: Ureidoglycolate dehydrogenase (NAD(+)) (349 aa).

Catalysis depends on His116, which acts as the Proton acceptor. NAD(+)-binding positions include Ser140, 174–176, Lys224, and 306–308; these read DMA and GQD.

Belongs to the LDH2/MDH2 oxidoreductase family. As to quaternary structure, homodimer.

The protein resides in the cytoplasm. It catalyses the reaction (S)-ureidoglycolate + NAD(+) = N-carbamoyl-2-oxoglycine + NADH + H(+). It participates in nitrogen metabolism; (S)-allantoin degradation; oxalurate from (S)-ureidoglycolate: step 1/1. Functionally, allD plays a pivotal role as a metabolic branch-point enzyme in nitrogen utilization via the assimilation of allantoin. It is able to utilize allantoin as a sole source of nitrogen under anaerobic conditions. Catalyzes the oxidation of ureidoglycolate to oxalurate. The protein is Ureidoglycolate dehydrogenase (NAD(+)) of Escherichia coli O157:H7.